A 198-amino-acid polypeptide reads, in one-letter code: Putative pseudouridine methyltransferase (198 aa).

S-adenosyl-L-methionine contacts are provided by Met-132 and Cys-186.

It belongs to the methyltransferase superfamily. TrmY family.

The protein resides in the cytoplasm. This chain is Putative pseudouridine methyltransferase, found in Shewanella baltica (strain OS223).